Consider the following 1502-residue polypeptide: Ras guanine nucleotide exchange factor P (1502 aa).

The Calponin-homology (CH) domain occupies 84-187; that stretch reads FIIDNQVLDW…LLYSLMKFSE (104 aa). Disordered stretches follow at residues 216–242, 325–436, 456–534, and 589–935; these read AQSS…SSNE, QQQQ…PNNN, EDNT…VGRG, and TTTA…NQNN. 4 stretches are compositionally biased toward low complexity: residues 218 to 242, 325 to 345, 371 to 400, and 407 to 421; these read SSSS…SSNE, QQQQ…TTTT, TTSS…LLNH, and SSST…PIST. Residues 287–328 adopt a coiled-coil conformation; it reads QQQQQQQQQQQQQQQQQQQQQQQQQQQQQQQQQQQQQQQQQQ. Polar residues predominate over residues 422-436; that stretch reads PSTSKSNSFQKPNNN. Residues 451–515 are a coiled coil; it reads EENEIEDNTN…NQNENEDEVK (65 aa). Positions 458–508 are enriched in low complexity; the sequence is NTNNNNNNNNNNNNNNNNNNNNNNNNNNNNNNNNTNDNINNNNKNNNNNQN. A compositionally biased stretch (pro residues) spans 518–528; the sequence is HSPPKVRPPLP. Low complexity-rich tracts occupy residues 589–646, 663–675, 686–719, 764–790, and 813–853; these read TTTA…NNNN, TIST…TGTI, SQPL…LSLP, NSIN…VSQS, and NSNS…NNNN. The span at 861–876 shows a compositional bias: polar residues; that stretch reads LTMSNQSANSLKSSGN. Positions 883–935 are enriched in low complexity; sequence TNGNNNISQNQNQNQNQNQNQTQNQNQNQNQNHISHSNSISSGNLNNHVNQNN. Positions 1032–1076 form a coiled coil; sequence VEENKNLITRTEEMQKMIDSLMKEKKELINEKNTLASMLAKTKQQ. Residues 1102–1249 enclose the N-terminal Ras-GEF domain; it reads GKYEIKGGTT…SELKLVFSTP (148 aa). The 232-residue stretch at 1267 to 1498 folds into the Ras-GEF domain; that stretch reads DPAEIARQLT…FNLSLICEPR (232 aa).

Functionally, promotes the exchange of Ras-bound GDP by GTP. In Dictyostelium discoideum (Social amoeba), this protein is Ras guanine nucleotide exchange factor P (gefP).